The chain runs to 505 residues: Actin nucleation-promoting factor WASL (505 aa).

Residue S2 is modified to N-acetylserine. The region spanning 34 to 141 (LGKKCVTMSS…KAVTDLLGRR (108 aa)) is the WH1 domain. Disordered stretches follow at residues 138–163 (LGRRQRKSEKRRDPPNGPNLPMATVD) and 184–205 (HTKEKKKGKAKKKRLTKADIGT). The span at 186–198 (KEKKKGKAKKKRL) shows a compositional bias: basic residues. The 14-residue stretch at 203–216 (IGTPSNFQHIGHVG) folds into the CRIB domain. A Phosphoserine; by TNK2 modification is found at S242. Phosphotyrosine; by FAK1 and TNK2 is present on Y256. The segment at 266-406 (EAVKNELRRQ…HQVPTTAGNK (141 aa)) is disordered. Composition is skewed to pro residues over residues 276 to 364 (APPP…PPPS) and 371 to 391 (VAPPPPPPPPPPPGPPPPPGL). The residue at position 307 (R307) is an Omega-N-methylarginine. 2 consecutive WH2 domains span residues 405 to 422 (NKAALLDQIREGAQLKKV) and 433 to 450 (GRDALLDQIRQGIQLKSV). The disordered stretch occupies residues 476–505 (QKRSKAIHSSDEDEDEDDEEDFEDDDEWED). 2 positions are modified to phosphoserine: S484 and S485. Over residues 486-505 (DEDEDEDDEEDFEDDDEWED) the composition is skewed to acidic residues.

Binds actin and the Arp2/3 complex. Interacts with CDC42. Interacts with FCHSD1. Interacts with FCHSD2. Binds to SH3 domains of GRB2. Interacts with the C-terminal SH3 domain of DNMBP. Interacts with SNX9. Interacts with the WW domains of PRPF40A/FBP11. Interacts with PTK2/FAK1. Interacts with PACSIN1, PACSIN2 and PACSIN3. Interacts with NOSTRIN. Binds to TNK2. Interacts with SNX33. Interacts with NONO (via second RRM domain); the interaction is direct. Component of a multiprotein complex with NONO and SFPQ; associates with the complex via direct interaction with NONO. As to quaternary structure, (Microbial infection) Interacts with E.coli effector protein EspF(U). Identified in a complex containing at least WASL, BAIAP2L1 and E.coli EspF(U). In terms of assembly, (Microbial infection) Interacts with Shigella flexneri protein IcsA. The interaction with IcsA enhances the affinity of WASL for Arp2/3, thus assembling a tight complex which has maximal activity in actin assembly. Phosphorylation at Ser-242, Tyr-256, Ser-484 and Ser-485 enhances actin polymerization activity.

It is found in the cytoplasm. The protein localises to the cytoskeleton. It localises to the nucleus. In terms of biological role, regulates actin polymerization by stimulating the actin-nucleating activity of the Arp2/3 complex. Involved in various processes, such as mitosis and cytokinesis, via its role in the regulation of actin polymerization. Together with CDC42, involved in the extension and maintenance of the formation of thin, actin-rich surface projections called filopodia. In addition to its role in the cytoplasm, also plays a role in the nucleus by regulating gene transcription, probably by promoting nuclear actin polymerization. Binds to HSF1/HSTF1 and forms a complex on heat shock promoter elements (HSE) that negatively regulates HSP90 expression. Plays a role in dendrite spine morphogenesis. Decreasing levels of DNMBP (using antisense RNA) alters apical junction morphology in cultured enterocytes, junctions curve instead of being nearly linear. The protein is Actin nucleation-promoting factor WASL (WASL) of Homo sapiens (Human).